Here is a 158-residue protein sequence, read N- to C-terminus: MGVFTFEDESTSTIAPARLYKALVKDADAIIPKAVEAIQSIETVEGNGGPGTIKKLTLIEGGETKYVLHKIEAVDEANLRYNYSIVGGVGLPDTIEKISFETKLVEGANGGSIGKVTIKIETKGDAQPNEEEGKAAKARGDAFFKAIENYLSAHPEYN.

Asp-8 is a trans-zeatin binding site. Ca(2+)-binding residues include Pro-32, Val-35, and Ile-38. Trans-zeatin-binding residues include Glu-60, His-69, Tyr-81, and Tyr-83.

This sequence belongs to the BetVI family.

The protein resides in the cytoplasm. The protein localises to the cytosol. Class II ribonuclease (RNase). Binds to cytokinins. Interacts with melatonin. This Lupinus luteus (European yellow lupine) protein is Class 10 plant pathogenesis-related protein 2A.